Consider the following 279-residue polypeptide: Phosphate import ATP-binding protein PstB 1 (279 aa).

The region spanning 26–274 (VMDCKLDKIF…PREQLTSDYI (249 aa)) is the ABC transporter domain. 59 to 66 (GPSGCGKS) is an ATP binding site.

This sequence belongs to the ABC transporter superfamily. Phosphate importer (TC 3.A.1.7) family. The complex is composed of two ATP-binding proteins (PstB), two transmembrane proteins (PstC and PstA) and a solute-binding protein (PstS).

The protein resides in the cell inner membrane. The enzyme catalyses phosphate(out) + ATP + H2O = ADP + 2 phosphate(in) + H(+). In terms of biological role, part of the ABC transporter complex PstSACB involved in phosphate import. Responsible for energy coupling to the transport system. The protein is Phosphate import ATP-binding protein PstB 1 of Pseudomonas putida (strain ATCC 47054 / DSM 6125 / CFBP 8728 / NCIMB 11950 / KT2440).